Consider the following 1993-residue polypeptide: [F-actin]-monooxygenase MICAL3 (1993 aa).

A monooxygenase domain region spans residues 2–494 (EERKQETTNQ…RHLYDSGETK (493 aa)). Residues cysteine 97, 116–118 (EKR), 123–125 (RNN), phenylalanine 183, tyrosine 298, and aspartate 398 contribute to the FAD site. The Calponin-homology (CH) domain occupies 518 to 624 (VARSSKLLGW…YLTQFYEMFK (107 aa)). Position 649 is a phosphoserine (serine 649). The segment at 658 to 704 (GQTISRKRSPKDKKEKDSDGAGKRRKTSQSEEEEPPRSYKGERPTLV) is disordered. The span at 669 to 679 (DKKEKDSDGAG) shows a compositional bias: basic and acidic residues. A phosphoserine mark is found at serine 685 and serine 687. The LIM zinc-binding domain occupies 762–824 (DTCYFCQKRV…KPHYCYRLSG (63 aa)). Residues cysteine 764, cysteine 767, histidine 785, cysteine 788, cysteine 791, cysteine 794, cysteine 814, and histidine 817 each contribute to the Zn(2+) site. Residues 854–886 (NGLASVAASSAERSPGTSMNGLEEPSIAKRLRG) are disordered. Over residues 860-873 (AASSAERSPGTSMN) the composition is skewed to polar residues. Residue threonine 887 is modified to Phosphothreonine. Disordered regions lie at residues 905–1023 (ELEE…RLQQ), 1039–1309 (WTHI…LSGP), 1332–1546 (IRRS…FFTP), and 1559–1837 (KENG…EELK). Positions 938–951 (SEMEEEEEEDDEDD) are enriched in acidic residues. The segment covering 975–988 (GRSEEELEASKNFE) has biased composition (basic and acidic residues). A Phosphoserine modification is found at serine 977. Over residues 989–1014 (PEEEEEEEEYEEEDEEYEEEEEEESS) the composition is skewed to acidic residues. The segment covering 1039–1051 (WTHIREREAEERM) has biased composition (basic and acidic residues). Over residues 1065–1090 (DEDDLEEDADSEPAETEGEAAEDGDP) the composition is skewed to acidic residues. Residues 1111 to 1148 (EAEHRLQSQAKVKAELELRVSENEEEKPSDAPKQEERG) are compositionally biased toward basic and acidic residues. Residues serine 1131 and serine 1187 each carry the phosphoserine modification. The segment covering 1199 to 1212 (LREKPKAEVPEEQK) has biased composition (basic and acidic residues). The span at 1230–1239 (SPTSPTSLQP) shows a compositional bias: polar residues. The segment covering 1245-1255 (PPTPPTPPPTQ) has biased composition (pro residues). A compositionally biased stretch (polar residues) spans 1257–1275 (PICSQPQPSSDASIPSPTK). Residue serine 1272 is modified to Phosphoserine. Threonine 1274 bears the Phosphothreonine mark. A phosphoserine mark is found at serine 1276 and serine 1335. The residue at position 1339 (threonine 1339) is a Phosphothreonine. 2 positions are modified to phosphoserine: serine 1369 and serine 1382. The span at 1405 to 1420 (PSDKELRSSQEERRDL) shows a compositional bias: basic and acidic residues. Residues 1421 to 1433 (SSSSGLGLHDSSS) show a composition bias toward low complexity. A Phosphoserine modification is found at serine 1431. Positions 1434–1452 (NMKTLGSQSFNTSDSTMLT) are enriched in polar residues. Threonine 1452 carries the post-translational modification Phosphothreonine. Positions 1454-1465 (PSSPPPPPPPNE) are enriched in pro residues. Acidic residues predominate over residues 1516-1530 (SVDEIPFADDVEDTY). Basic and acidic residues predominate over residues 1584–1600 (EAKELAEERMRAREKSV). Polar residues predominate over residues 1623-1633 (SSRSHTAQSQG). Serine 1640 is modified (phosphoserine). Low complexity predominate over residues 1665 to 1685 (SPPSDSGGPDGSVTSSEGSSG). Positions 1686–1704 (KSKKRSSLFSPRRNKKEKK) are enriched in basic residues. Residues serine 1692 and serine 1695 each carry the phosphoserine modification. Positions 1754–1763 (TPSSGATVDS) are enriched in polar residues. Residues 1795–1811 (ILERSSQKSKREPRTYT) show a composition bias toward basic and acidic residues. A coiled-coil region spans residues 1817–1983 (AKLTRRVQKA…EEDKDLEAAM (167 aa)). Residues 1819–1830 (LTRRVQKAARRQ) are compositionally biased toward basic residues. Residues 1832–1981 (KQEELKRLHR…EKEEDKDLEA (150 aa)) enclose the bMERB domain. A Phosphoserine modification is found at serine 1903.

It belongs to the Mical family. Interacts with RAB1B, RAB8A, RAB10, RAB13 and RAB15 (in their GTP-bound forms); binding to RAB1B is of low affinity compared to other Rab proteins; at least in case of RAB8A can bind 2 molecules of RAB8A simultaneously through a high and a low affinity binding site, respectively. Interacts with ERC1 and RAB8A; may bridge ERC1 with RAB8A. Interacts with KIF23 and ERC1; enhances the interaction between KIF23 and ERC1. Interacts with NINL. The cofactor is FAD.

It localises to the cytoplasm. It is found in the cell cortex. The protein localises to the cytoskeleton. Its subcellular location is the nucleus. The protein resides in the midbody. It localises to the spindle. It is found in the cilium basal body. It catalyses the reaction L-methionyl-[F-actin] + NADPH + O2 + H(+) = L-methionyl-(R)-S-oxide-[F-actin] + NADP(+) + H2O. In terms of biological role, monooxygenase that promotes depolymerization of F-actin by mediating oxidation of specific methionine residues on actin to form methionine-sulfoxide, resulting in actin filament disassembly and preventing repolymerization. In the absence of actin, it also functions as a NADPH oxidase producing H(2)O(2). Seems to act as Rab effector protein and play a role in vesicle trafficking. Involved in exocytic vesicles tethering and fusion: the monooxygenase activity is required for this process and implicates RAB8A associated with exocytotic vesicles. Required for cytokinesis. Contributes to stabilization and/or maturation of the intercellular bridge independently of its monooxygenase activity. Promotes recruitment of Rab8 and ERC1 to the intercellular bridge, and together these proteins are proposed to function in timely abscission. The polypeptide is [F-actin]-monooxygenase MICAL3 (Mical3) (Mus musculus (Mouse)).